Consider the following 317-residue polypeptide: 4-hydroxy-3-methylbut-2-enyl diphosphate reductase (317 aa).

Cysteine 12 lines the [4Fe-4S] cluster pocket. 2 residues coordinate (2E)-4-hydroxy-3-methylbut-2-enyl diphosphate: histidine 41 and histidine 74. Positions 41 and 74 each coordinate dimethylallyl diphosphate. Isopentenyl diphosphate contacts are provided by histidine 41 and histidine 74. Position 96 (cysteine 96) interacts with [4Fe-4S] cluster. Histidine 124 contributes to the (2E)-4-hydroxy-3-methylbut-2-enyl diphosphate binding site. Residue histidine 124 participates in dimethylallyl diphosphate binding. Histidine 124 is a binding site for isopentenyl diphosphate. The active-site Proton donor is the glutamate 126. Threonine 169 serves as a coordination point for (2E)-4-hydroxy-3-methylbut-2-enyl diphosphate. Cysteine 199 is a [4Fe-4S] cluster binding site. (2E)-4-hydroxy-3-methylbut-2-enyl diphosphate contacts are provided by serine 227, serine 228, asparagine 229, and serine 271. Residues serine 227, serine 228, asparagine 229, and serine 271 each coordinate dimethylallyl diphosphate. The isopentenyl diphosphate site is built by serine 227, serine 228, asparagine 229, and serine 271.

It belongs to the IspH family. Requires [4Fe-4S] cluster as cofactor.

It catalyses the reaction isopentenyl diphosphate + 2 oxidized [2Fe-2S]-[ferredoxin] + H2O = (2E)-4-hydroxy-3-methylbut-2-enyl diphosphate + 2 reduced [2Fe-2S]-[ferredoxin] + 2 H(+). The catalysed reaction is dimethylallyl diphosphate + 2 oxidized [2Fe-2S]-[ferredoxin] + H2O = (2E)-4-hydroxy-3-methylbut-2-enyl diphosphate + 2 reduced [2Fe-2S]-[ferredoxin] + 2 H(+). Its pathway is isoprenoid biosynthesis; dimethylallyl diphosphate biosynthesis; dimethylallyl diphosphate from (2E)-4-hydroxy-3-methylbutenyl diphosphate: step 1/1. It functions in the pathway isoprenoid biosynthesis; isopentenyl diphosphate biosynthesis via DXP pathway; isopentenyl diphosphate from 1-deoxy-D-xylulose 5-phosphate: step 6/6. Its function is as follows. Catalyzes the conversion of 1-hydroxy-2-methyl-2-(E)-butenyl 4-diphosphate (HMBPP) into a mixture of isopentenyl diphosphate (IPP) and dimethylallyl diphosphate (DMAPP). Acts in the terminal step of the DOXP/MEP pathway for isoprenoid precursor biosynthesis. The protein is 4-hydroxy-3-methylbut-2-enyl diphosphate reductase of Vibrio parahaemolyticus serotype O3:K6 (strain RIMD 2210633).